Here is a 438-residue protein sequence, read N- to C-terminus: Dihydroorotase (438 aa).

Residues H58 and H60 each coordinate Zn(2+). Substrate contacts are provided by residues 60–62 (HLR) and N92. Positions 152, 179, and 232 each coordinate Zn(2+). N278 lines the substrate pocket. D305 contributes to the Zn(2+) binding site. D305 is an active-site residue. Substrate-binding positions include H309 and 323 to 324 (FG).

The protein belongs to the metallo-dependent hydrolases superfamily. DHOase family. Class I DHOase subfamily. It depends on Zn(2+) as a cofactor.

The catalysed reaction is (S)-dihydroorotate + H2O = N-carbamoyl-L-aspartate + H(+). It functions in the pathway pyrimidine metabolism; UMP biosynthesis via de novo pathway; (S)-dihydroorotate from bicarbonate: step 3/3. In terms of biological role, catalyzes the reversible cyclization of carbamoyl aspartate to dihydroorotate. This Leifsonia xyli subsp. xyli (strain CTCB07) protein is Dihydroorotase.